Reading from the N-terminus, the 197-residue chain is Recombination protein RecR (197 aa).

The C4-type zinc finger occupies 55–70 (CVQCRDFTESEICTIC). The 96-residue stretch at 78–173 (QQLCVVESPA…RPSRLAQGMP (96 aa)) folds into the Toprim domain.

Belongs to the RecR family.

May play a role in DNA repair. It seems to be involved in an RecBC-independent recombinational process of DNA repair. It may act with RecF and RecO. The sequence is that of Recombination protein RecR from Xanthomonas oryzae pv. oryzae (strain MAFF 311018).